The primary structure comprises 138 residues: MASLPEPQKLARNFARCNDWEEKYLYVIELGERLDPLPDEWRNPENLISGCQSQVWIVTQPDEQGVLILHGDSDAAIVKGLIAVVFSLYQGLTAQEIVELDVRPFFESLALNQHLTPSRSQGLEAMLRAIRAHAAALL.

Cys-51 acts as the Cysteine persulfide intermediate in catalysis.

It belongs to the SufE family. Homodimer. Interacts with SufS.

The protein resides in the cytoplasm. It functions in the pathway cofactor biosynthesis; iron-sulfur cluster biosynthesis. Functionally, participates in cysteine desulfuration mediated by SufS. Cysteine desulfuration mobilizes sulfur from L-cysteine to yield L-alanine and constitutes an essential step in sulfur metabolism for biosynthesis of a variety of sulfur-containing biomolecules. Functions as a sulfur acceptor for SufS, by mediating the direct transfer of the sulfur atom from the S-sulfanylcysteine of SufS, an intermediate product of cysteine desulfuration process. This chain is Cysteine desulfuration protein SufE, found in Pectobacterium atrosepticum (strain SCRI 1043 / ATCC BAA-672) (Erwinia carotovora subsp. atroseptica).